The primary structure comprises 324 residues: Polyketide biosynthesis acyltransferase homolog PksD (324 aa).

Ser-99 is an active-site residue.

The protein resides in the cytoplasm. It participates in antibiotic biosynthesis; bacillaene biosynthesis. Its function is as follows. Probably involved in some intermediate steps for the synthesis of the antibiotic polyketide bacillaene which is involved in secondary metabolism. This Bacillus subtilis (strain 168) protein is Polyketide biosynthesis acyltransferase homolog PksD (pksD).